Here is a 170-residue protein sequence, read N- to C-terminus: Arginine repressor (170 aa).

The protein belongs to the ArgR family.

Its subcellular location is the cytoplasm. It participates in amino-acid biosynthesis; L-arginine biosynthesis [regulation]. In terms of biological role, regulates arginine biosynthesis genes. This chain is Arginine repressor, found in Bifidobacterium longum (strain DJO10A).